Here is a 231-residue protein sequence, read N- to C-terminus: Peroxisomal membrane protein 11E (231 aa).

At 1 to 91 (MTTLDLTRAE…LPLVLLGKSK (91 aa)) the chain is on the cytoplasmic side. Residues 92 to 108 (NALLSTFLFLDQIVWLG) form a helical membrane-spanning segment. The Lumenal segment spans residues 109-202 (RSGIYKNKER…LLQLAPKTIS (94 aa)). A helical membrane pass occupies residues 203–222 (PRVTGAFGFTTSLISCYQLL). Over 223-231 (PSRPKLKTP) the chain is Cytoplasmic.

The protein belongs to the peroxin-11 family. Homooligomer. Interacts with ARC5 and FIS1B on peroxisomes. In terms of tissue distribution, expressed in leaves and developing siliques.

It is found in the peroxisome membrane. Involved in peroxisomal proliferation. Promotes peroxisomal duplication, aggregation or elongation without fission. In Arabidopsis thaliana (Mouse-ear cress), this protein is Peroxisomal membrane protein 11E (PEX11E).